Here is a 451-residue protein sequence, read N- to C-terminus: uncharacterized protein (451 aa).

Residues 1 to 22 (MKLKLIFSLFLVLVFCSLFVFG) form the signal peptide. N-linked (GlcNAc...) asparagine glycosylation is found at Asn-25, Asn-45, Asn-209, Asn-326, and Asn-402.

The protein localises to the secreted. This is an uncharacterized protein from Dictyostelium discoideum (Social amoeba).